The primary structure comprises 426 residues: Glutamate-1-semialdehyde 2,1-aminomutase (426 aa).

Position 265 is an N6-(pyridoxal phosphate)lysine (Lys265).

It belongs to the class-III pyridoxal-phosphate-dependent aminotransferase family. HemL subfamily. As to quaternary structure, homodimer. The cofactor is pyridoxal 5'-phosphate.

It localises to the cytoplasm. It catalyses the reaction (S)-4-amino-5-oxopentanoate = 5-aminolevulinate. The protein operates within porphyrin-containing compound metabolism; protoporphyrin-IX biosynthesis; 5-aminolevulinate from L-glutamyl-tRNA(Glu): step 2/2. The polypeptide is Glutamate-1-semialdehyde 2,1-aminomutase (Akkermansia muciniphila (strain ATCC BAA-835 / DSM 22959 / JCM 33894 / BCRC 81048 / CCUG 64013 / CIP 107961 / Muc)).